A 404-amino-acid chain; its full sequence is Serine/threonine-protein phosphatase 2A regulatory subunit rsa-1 (404 aa).

In terms of assembly, part of a complex consisting of a common heterodimeric core enzyme, composed of catalytic subunit let-92 and constant regulatory subunit paa-1, that associates with a variety of regulatory subunits which confer distinct properties to the holoenzyme. Interacts with rsa-2, spd-5 and tpxl-1.

It localises to the cytoplasm. It is found in the cytoskeleton. The protein resides in the microtubule organizing center. Its subcellular location is the centrosome. Functionally, regulatory subunit of phosphatase let-92 which recruits let-92/paa-1 complex to the centrosomes, thereby regulating microtubule outgrowth from centrosomes and mitotic spindle assembly ensuring the stability of kinetochore microtubules. The chain is Serine/threonine-protein phosphatase 2A regulatory subunit rsa-1 from Caenorhabditis elegans.